The following is a 108-amino-acid chain: UPF0060 membrane protein Mflv_3127 (108 aa).

The next 4 membrane-spanning stretches (helical) occupy residues 7-27 (LLFVLAAVLEIGGAWLVWQGF), 32-52 (GWLWVGAGVLALGAYGFVAAF), 61-81 (VLAAYGGVFVAGSLIWGMVAD), and 87-107 (RWDITGAAVCLLGVVLIMYAP).

This sequence belongs to the UPF0060 family.

The protein localises to the cell membrane. In Mycolicibacterium gilvum (strain PYR-GCK) (Mycobacterium gilvum (strain PYR-GCK)), this protein is UPF0060 membrane protein Mflv_3127.